A 185-amino-acid polypeptide reads, in one-letter code: piRNA-mediated silencing protein C19orf84 homolog (185 aa).

2 disordered regions span residues 1-38 and 93-185; these read MDEL…PSLL and HIWP…EADY. Residues 11-25 are compositionally biased toward polar residues; the sequence is NGDNLSLPSAGTESW. Over residues 26-38 the composition is skewed to low complexity; sequence PTSATPGLPPSLL. Residues 118–130 are compositionally biased toward basic residues; it reads RPSRGWGRGRGRG. Residues 139-150 show a composition bias toward basic and acidic residues; sequence GPERAEERERNM.

In terms of assembly, interacts with SPOCD1.

Its subcellular location is the nucleus. It localises to the nucleoplasm. Functionally, protein adapter involved in piRNA-directed transposon methylation by connecting PIWIL4-piRNA and DNA methylation machineries. The PIWIL4-piRNA pathway plays a central role during spermatogenesis by directing transposon DNA methylation and silencing, thereby preventing their mobilization, which is essential for the germline integrity. This Mus musculus (Mouse) protein is piRNA-mediated silencing protein C19orf84 homolog.